A 117-amino-acid polypeptide reads, in one-letter code: Large ribosomal subunit protein uL22 (117 aa).

The protein belongs to the universal ribosomal protein uL22 family. In terms of assembly, part of the 50S ribosomal subunit.

This protein binds specifically to 23S rRNA; its binding is stimulated by other ribosomal proteins, e.g. L4, L17, and L20. It is important during the early stages of 50S assembly. It makes multiple contacts with different domains of the 23S rRNA in the assembled 50S subunit and ribosome. Its function is as follows. The globular domain of the protein is located near the polypeptide exit tunnel on the outside of the subunit, while an extended beta-hairpin is found that lines the wall of the exit tunnel in the center of the 70S ribosome. The sequence is that of Large ribosomal subunit protein uL22 from Staphylococcus aureus (strain USA300).